The chain runs to 81 residues: Cytochrome b559 subunit alpha (81 aa).

The helical transmembrane segment at 21-35 (VIHSITIPALFIAGW) threads the bilayer. His-23 provides a ligand contact to heme.

It belongs to the PsbE/PsbF family. Heterodimer of an alpha subunit and a beta subunit. PSII is composed of 1 copy each of membrane proteins PsbA, PsbB, PsbC, PsbD, PsbE, PsbF, PsbH, PsbI, PsbJ, PsbK, PsbL, PsbM, PsbT, PsbX, PsbY, PsbZ, Psb30/Ycf12, at least 3 peripheral proteins of the oxygen-evolving complex and a large number of cofactors. It forms dimeric complexes. Heme b is required as a cofactor.

The protein resides in the plastid. The protein localises to the chloroplast thylakoid membrane. Functionally, this b-type cytochrome is tightly associated with the reaction center of photosystem II (PSII). PSII is a light-driven water:plastoquinone oxidoreductase that uses light energy to abstract electrons from H(2)O, generating O(2) and a proton gradient subsequently used for ATP formation. It consists of a core antenna complex that captures photons, and an electron transfer chain that converts photonic excitation into a charge separation. The polypeptide is Cytochrome b559 subunit alpha (Tetradesmus obliquus (Green alga)).